Reading from the N-terminus, the 103-residue chain is Large ribosomal subunit protein bL21 (103 aa).

It belongs to the bacterial ribosomal protein bL21 family. Part of the 50S ribosomal subunit. Contacts protein L20.

Its function is as follows. This protein binds to 23S rRNA in the presence of protein L20. The chain is Large ribosomal subunit protein bL21 from Vibrio parahaemolyticus serotype O3:K6 (strain RIMD 2210633).